The sequence spans 361 residues: Phospho-N-acetylmuramoyl-pentapeptide-transferase (361 aa).

10 helical membrane-spanning segments follow: residues 27–47 (ILASLTALIVGLLCGPLMIRW), 70–90 (GTPTMGGVLILLAITVSCLLW), 97–117 (SLWLVLLVTLANGLVGWVDDY), 134–154 (YFWQSVIALVAVSYLYWNASL), 167–187 (TVTWDLGVFFPVLAYFVIVGS), 199–219 (GLAIMPIVMVAGALGVFAYAS), 236–256 (TGELTIFCSSIVGAGLGFLWY), 263–283 (VFMGDVGSLALGAALGIVAVV), 288–308 (LVLLIMGGLFVIETLSVILQV), and 338–358 (KVIVRFWIITVVFVLCGLATL).

It belongs to the glycosyltransferase 4 family. MraY subfamily. Mg(2+) serves as cofactor.

The protein localises to the cell inner membrane. The catalysed reaction is UDP-N-acetyl-alpha-D-muramoyl-L-alanyl-gamma-D-glutamyl-meso-2,6-diaminopimeloyl-D-alanyl-D-alanine + di-trans,octa-cis-undecaprenyl phosphate = di-trans,octa-cis-undecaprenyl diphospho-N-acetyl-alpha-D-muramoyl-L-alanyl-D-glutamyl-meso-2,6-diaminopimeloyl-D-alanyl-D-alanine + UMP. Its pathway is cell wall biogenesis; peptidoglycan biosynthesis. In terms of biological role, catalyzes the initial step of the lipid cycle reactions in the biosynthesis of the cell wall peptidoglycan: transfers peptidoglycan precursor phospho-MurNAc-pentapeptide from UDP-MurNAc-pentapeptide onto the lipid carrier undecaprenyl phosphate, yielding undecaprenyl-pyrophosphoryl-MurNAc-pentapeptide, known as lipid I. The chain is Phospho-N-acetylmuramoyl-pentapeptide-transferase from Legionella pneumophila subsp. pneumophila (strain Philadelphia 1 / ATCC 33152 / DSM 7513).